The following is a 274-amino-acid chain: 4-hydroxy-tetrahydrodipicolinate reductase (274 aa).

7–12 (GVTGRM) provides a ligand contact to NAD(+). An NADP(+)-binding site is contributed by Arg40. NAD(+) contacts are provided by residues 103-105 (GTT) and 127-130 (SANF). His160 serves as the catalytic Proton donor/acceptor. Position 161 (His161) interacts with (S)-2,3,4,5-tetrahydrodipicolinate. Lys164 functions as the Proton donor in the catalytic mechanism. 170–171 (GT) contacts (S)-2,3,4,5-tetrahydrodipicolinate.

The protein belongs to the DapB family. Homotetramer.

It localises to the cytoplasm. The enzyme catalyses (S)-2,3,4,5-tetrahydrodipicolinate + NAD(+) + H2O = (2S,4S)-4-hydroxy-2,3,4,5-tetrahydrodipicolinate + NADH + H(+). It carries out the reaction (S)-2,3,4,5-tetrahydrodipicolinate + NADP(+) + H2O = (2S,4S)-4-hydroxy-2,3,4,5-tetrahydrodipicolinate + NADPH + H(+). It functions in the pathway amino-acid biosynthesis; L-lysine biosynthesis via DAP pathway; (S)-tetrahydrodipicolinate from L-aspartate: step 4/4. Functionally, catalyzes the conversion of 4-hydroxy-tetrahydrodipicolinate (HTPA) to tetrahydrodipicolinate. In Blochmanniella floridana, this protein is 4-hydroxy-tetrahydrodipicolinate reductase.